A 123-amino-acid chain; its full sequence is Large ribosomal subunit protein bL12 (123 aa).

Belongs to the bacterial ribosomal protein bL12 family. In terms of assembly, homodimer. Part of the ribosomal stalk of the 50S ribosomal subunit. Forms a multimeric L10(L12)X complex, where L10 forms an elongated spine to which 2 to 4 L12 dimers bind in a sequential fashion. Binds GTP-bound translation factors.

Its function is as follows. Forms part of the ribosomal stalk which helps the ribosome interact with GTP-bound translation factors. Is thus essential for accurate translation. This is Large ribosomal subunit protein bL12 from Laribacter hongkongensis (strain HLHK9).